We begin with the raw amino-acid sequence, 283 residues long: (+)-O-methylkolavelool synthase (283 aa).

S-adenosyl-L-methionine contacts are provided by residues Gln-106, 129 to 130, and His-151; that span reads NA.

The protein belongs to the methyltransferase superfamily.

The enzyme catalyses (+)-kolavelool + S-adenosyl-L-methionine = (+)-O-methylkolavelool + S-adenosyl-L-homocysteine + H(+). Functionally, involved in the biosynthesis of the diterpene (+)-O-methylkolavelool. Catalyzes the transfer of a methyl group from S-adenosyl-L-methionine to the hydroxy group of (+)-kolavelool, forming (+)-O-methylkolavelool. The protein is (+)-O-methylkolavelool synthase of Herpetosiphon aurantiacus (strain ATCC 23779 / DSM 785 / 114-95).